The following is a 120-amino-acid chain: MDGLAIGGVSAPMTAERPQQVKKQLSRRTPDAADGRKPTRMERAKAWTPEIEDQFRLQNSGFKSLDEYVDMYGEPERWPNELGGFISKTQLKSNGYFVYWRKFRECEDKHLAQVKIYYYD.

The interval 1 to 45 (MDGLAIGGVSAPMTAERPQQVKKQLSRRTPDAADGRKPTRMERAK) is disordered. A compositionally biased stretch (basic and acidic residues) spans 28–45 (RTPDAADGRKPTRMERAK).

The protein belongs to the MEIG1 family.

The polypeptide is Meiosis expressed gene 1 protein homolog (Oxyrrhis marina (Dinoflagellate)).